The chain runs to 337 residues: Glyceraldehyde-3-phosphate dehydrogenase (337 aa).

NADP(+) contacts are provided by residues 11–12 (TV), 34–35 (TR), and G110. Residue 139–141 (SCN) coordinates D-glyceraldehyde 3-phosphate. C140 acts as the Nucleophile in catalysis. Residue D171 coordinates NADP(+). 194 to 195 (HG) serves as a coordination point for D-glyceraldehyde 3-phosphate. NADP(+) is bound at residue Q300.

It belongs to the glyceraldehyde-3-phosphate dehydrogenase family. As to quaternary structure, homotetramer.

It is found in the cytoplasm. It catalyses the reaction D-glyceraldehyde 3-phosphate + phosphate + NADP(+) = (2R)-3-phospho-glyceroyl phosphate + NADPH + H(+). It carries out the reaction D-glyceraldehyde 3-phosphate + phosphate + NAD(+) = (2R)-3-phospho-glyceroyl phosphate + NADH + H(+). It functions in the pathway carbohydrate degradation; glycolysis; pyruvate from D-glyceraldehyde 3-phosphate: step 1/5. Exhibits a dual-cofactor specificity, with a marked preference for NADP(+) over NAD(+). This chain is Glyceraldehyde-3-phosphate dehydrogenase (gap), found in Methanothermus fervidus.